Reading from the N-terminus, the 431-residue chain is Tol-Pal system protein TolB (431 aa).

The N-terminal stretch at 1-19 (MKRLLFFLICVFFSKTSYS) is a signal peptide.

Belongs to the TolB family. As to quaternary structure, the Tol-Pal system is composed of five core proteins: the inner membrane proteins TolA, TolQ and TolR, the periplasmic protein TolB and the outer membrane protein Pal. They form a network linking the inner and outer membranes and the peptidoglycan layer.

It is found in the periplasm. Its function is as follows. Part of the Tol-Pal system, which plays a role in outer membrane invagination during cell division and is important for maintaining outer membrane integrity. TolB occupies a key intermediary position in the Tol-Pal system because it communicates directly with both membrane-embedded components, Pal in the outer membrane and TolA in the inner membrane. In Wigglesworthia glossinidia brevipalpis, this protein is Tol-Pal system protein TolB.